An 825-amino-acid polypeptide reads, in one-letter code: Zinc finger protein 229 (825 aa).

The disordered stretch occupies residues 1–26 (METLTSRHEKRALHSQASAISQDREE). Residues 34–108 (LSFKDVAVVF…SHKELSSCKI (75 aa)) enclose the KRAB domain. The segment at 291 to 315 (KLCQYDEFSEGLRHSAHLNRHQRVP) adopts a C2H2-type 1; degenerate zinc-finger fold. 7 consecutive C2H2-type zinc fingers follow at residues 349-371 (YRCD…QGVH), 377-399 (YKCE…QRVH), 405-427 (YKCS…QRLH), 433-455 (YTCS…QHIH), 461-483 (YSCG…QKTH), 489-511 (YQCD…QRVH), and 517-539 (YKCN…QRLH). A Glycyl lysine isopeptide (Lys-Gly) (interchain with G-Cter in SUMO2) cross-link involves residue Lys543. 10 consecutive C2H2-type zinc fingers follow at residues 545-566 (YKCE…QRVH), 572-594 (YKCS…QRVH), 600-622 (YVCD…QRVH), 628-650 (YKCA…QRVH), 656-678 (YRCQ…QRVH), 684-706 (YTCD…QRLH), 712-734 (YTCC…KRVH), 740-762 (YRCH…QRVH), 768-790 (YKCE…QRVH), and 796-818 (YTCG…QRVH).

This sequence belongs to the krueppel C2H2-type zinc-finger protein family.

Its subcellular location is the nucleus. Its function is as follows. May be involved in transcriptional regulation. This is Zinc finger protein 229 from Homo sapiens (Human).